A 314-amino-acid polypeptide reads, in one-letter code: Putative S-adenosyl-L-methionine-dependent methyltransferase MAV_0301 (314 aa).

Residues Asp-132 and 161–162 contribute to the S-adenosyl-L-methionine site; that span reads DL.

Belongs to the UPF0677 family.

Functionally, exhibits S-adenosyl-L-methionine-dependent methyltransferase activity. The chain is Putative S-adenosyl-L-methionine-dependent methyltransferase MAV_0301 from Mycobacterium avium (strain 104).